Reading from the N-terminus, the 448-residue chain is Probable D-serine dehydratase (448 aa).

At Lys-117 the chain carries N6-(pyridoxal phosphate)lysine.

It belongs to the serine/threonine dehydratase family. DsdA subfamily. Pyridoxal 5'-phosphate is required as a cofactor.

It catalyses the reaction D-serine = pyruvate + NH4(+). The sequence is that of Probable D-serine dehydratase (dsdA) from Bacillus subtilis (strain 168).